The following is a 143-amino-acid chain: Nucleoside diphosphate kinase (143 aa).

ATP contacts are provided by lysine 11, phenylalanine 59, arginine 87, threonine 93, arginine 104, and asparagine 114. Histidine 117 (pros-phosphohistidine intermediate) is an active-site residue.

Belongs to the NDK family. In terms of assembly, homotetramer. Requires Mg(2+) as cofactor.

It localises to the cytoplasm. The enzyme catalyses a 2'-deoxyribonucleoside 5'-diphosphate + ATP = a 2'-deoxyribonucleoside 5'-triphosphate + ADP. The catalysed reaction is a ribonucleoside 5'-diphosphate + ATP = a ribonucleoside 5'-triphosphate + ADP. Major role in the synthesis of nucleoside triphosphates other than ATP. The ATP gamma phosphate is transferred to the NDP beta phosphate via a ping-pong mechanism, using a phosphorylated active-site intermediate. In Ectopseudomonas mendocina (strain ymp) (Pseudomonas mendocina), this protein is Nucleoside diphosphate kinase.